We begin with the raw amino-acid sequence, 230 residues long: Type II restriction enzyme SinI (230 aa).

The catalysed reaction is Endonucleolytic cleavage of DNA to give specific double-stranded fragments with terminal 5'-phosphates.. A P subtype restriction enzyme that recognizes the double-stranded sequence 5'-GGWCC-3' and cleaves after G-1. This Salmonella infantis protein is Type II restriction enzyme SinI (sinIR).